A 776-amino-acid chain; its full sequence is Probable E3 ubiquitin-protein ligase HECTD2 (776 aa).

The tract at residues 1-46 is disordered; sequence MSEAVRVPSPATPLVVAAPAPEERKGKESEREKLPPIVSAGAGATA. Low complexity predominate over residues 7 to 20; sequence VPSPATPLVVAAPA. S9 bears the Phosphoserine mark. Over residues 21–34 the composition is skewed to basic and acidic residues; the sequence is PEERKGKESEREKL. Residues 437–776 form the HECT domain; the sequence is KRADLKKKLK…ISNSEGFGLE (340 aa). C744 (glycyl thioester intermediate) is an active-site residue.

It carries out the reaction S-ubiquitinyl-[E2 ubiquitin-conjugating enzyme]-L-cysteine + [acceptor protein]-L-lysine = [E2 ubiquitin-conjugating enzyme]-L-cysteine + N(6)-ubiquitinyl-[acceptor protein]-L-lysine.. The protein operates within protein modification; protein ubiquitination. E3 ubiquitin-protein ligase which accepts ubiquitin from an E2 ubiquitin-conjugating enzyme in the form of a thioester and then directly transfers the ubiquitin to targeted substrates. Functionally, (Microbial infection) Catalyzes ubiquitination of Botulinum neurotoxin A light chain (LC) of C.botulinum neurotoxin type A (BoNT/A). The protein is Probable E3 ubiquitin-protein ligase HECTD2 of Homo sapiens (Human).